A 134-amino-acid polypeptide reads, in one-letter code: MTISLGFVVAEFNRDLTYQMELLGREHAEFLGATVKETILVPGVFDMPLAIKKLCQRDDIDAVVTIGSVIEGDTDHDQVVMQHAARKIMDLSLEFNKPVTLGIPGPGMTRMAAHERVDYAKRAVEAAVKLVRRL.

Residues F12, 44–46 (VFD), and 68–70 (SVI) contribute to the 5-amino-6-(D-ribitylamino)uracil site. (2S)-2-hydroxy-3-oxobutyl phosphate is bound at residue 73-74 (DT). H76 functions as the Proton donor in the catalytic mechanism. L101 is a binding site for 5-amino-6-(D-ribitylamino)uracil. R116 is a (2S)-2-hydroxy-3-oxobutyl phosphate binding site.

It belongs to the DMRL synthase family.

The enzyme catalyses (2S)-2-hydroxy-3-oxobutyl phosphate + 5-amino-6-(D-ribitylamino)uracil = 6,7-dimethyl-8-(1-D-ribityl)lumazine + phosphate + 2 H2O + H(+). The protein operates within cofactor biosynthesis; riboflavin biosynthesis; riboflavin from 2-hydroxy-3-oxobutyl phosphate and 5-amino-6-(D-ribitylamino)uracil: step 1/2. In terms of biological role, catalyzes the formation of 6,7-dimethyl-8-ribityllumazine by condensation of 5-amino-6-(D-ribitylamino)uracil with 3,4-dihydroxy-2-butanone 4-phosphate. This is the penultimate step in the biosynthesis of riboflavin. This is 6,7-dimethyl-8-ribityllumazine synthase from Methanosarcina barkeri (strain Fusaro / DSM 804).